A 106-amino-acid chain; its full sequence is Late cornified envelope protein 2A (106 aa).

Residues 1 to 10 (MSCQQNQQQC) show a composition bias toward low complexity. The interval 1–25 (MSCQQNQQQCQPPPKCPPKCPPKCP) is disordered. A compositionally biased stretch (pro residues) spans 11-25 (QPPPKCPPKCPPKCP).

The protein belongs to the LCE family. In terms of assembly, interacts with CYSRT1. Skin-specific. Expression was readily detected in adult trunk skin, adult arm skin, fetal skin, penal skin, vulva, esophagus and tongue. Not expressed in the cervix, rectum, lung, colon, or placenta.

Functionally, precursors of the cornified envelope of the stratum corneum. The sequence is that of Late cornified envelope protein 2A (LCE2A) from Homo sapiens (Human).